The chain runs to 180 residues: Nascent polypeptide-associated complex subunit alpha (180 aa).

In terms of domain architecture, NAC-A/B spans Ser-16–Ile-80. The disordered stretch occupies residues Ala-81 to Ile-113. The segment covering Glu-82–Thr-100 has biased composition (low complexity). Positions Leu-142 to Leu-179 constitute a UBA domain.

The protein belongs to the NAC-alpha family. As to quaternary structure, part of the nascent polypeptide-associated complex (NAC), consisting of EGD2 and EGD1. NAC associates with ribosomes via EGD1.

The protein resides in the cytoplasm. It is found in the nucleus. In terms of biological role, component of the nascent polypeptide-associated complex (NAC), a dynamic component of the ribosomal exit tunnel, protecting the emerging polypeptides from interaction with other cytoplasmic proteins to ensure appropriate nascent protein targeting. The NAC complex also promotes mitochondrial protein import by enhancing productive ribosome interactions with the outer mitochondrial membrane and blocks the inappropriate interaction of ribosomes translating non-secretory nascent polypeptides with translocation sites in the membrane of the endoplasmic reticulum. EGD2 may also be involved in transcription regulation. In Debaryomyces hansenii (strain ATCC 36239 / CBS 767 / BCRC 21394 / JCM 1990 / NBRC 0083 / IGC 2968) (Yeast), this protein is Nascent polypeptide-associated complex subunit alpha (EGD2).